The following is a 74-amino-acid chain: Exodeoxyribonuclease 7 small subunit (74 aa).

The protein belongs to the XseB family. Heterooligomer composed of large and small subunits.

Its subcellular location is the cytoplasm. The catalysed reaction is Exonucleolytic cleavage in either 5'- to 3'- or 3'- to 5'-direction to yield nucleoside 5'-phosphates.. Bidirectionally degrades single-stranded DNA into large acid-insoluble oligonucleotides, which are then degraded further into small acid-soluble oligonucleotides. The chain is Exodeoxyribonuclease 7 small subunit from Neisseria meningitidis serogroup C / serotype 2a (strain ATCC 700532 / DSM 15464 / FAM18).